Here is a 741-residue protein sequence, read N- to C-terminus: Mitofusin-1 (741 aa).

Residues 1 to 584 (MAETVSPLKH…AAQEELMITL (584 aa)) are Cytoplasmic-facing. The interval 9–73 (KHFVLAKKAI…LAVIGEVLSR (65 aa)) is part of a helix bundle domain, formed by helices from N-terminal and C-terminal regions. A Dynamin-type G domain is found at 72-321 (SRRHMKVAFF…ARLQEFQNFE (250 aa)). The interval 82–89 (GRTSSGKS) is G1 motif. 85-90 (SSGKSS) contributes to the GTP binding site. Positions 108 to 109 (TT) are G2 motif. The segment at 178–181 (DSPG) is G3 motif. 237 to 240 (NRWD) provides a ligand contact to GTP. Residues 237 to 240 (NRWD) form a G4 motif region. Glutamate 266 is a region of interest (G5 motif). Positions 284 and 286 each coordinate GTP. The part of a helix bundle domain, formed by helices from N-terminal and C-terminal regions stretch occupies residues 338 to 364 (EQHTIRAKQILDTVKNILDSVNVAAAE). The stretch at 371-408 (EEREDQIDRLDFIRNQMNLLTLDVKKKIKEVTEEVANK) forms a coiled coil. The helical transmembrane segment at 585 to 605 (ITGLASLTSRTSMGIIVVGGV) threads the bilayer. Over 606-608 (IWK) the chain is Mitochondrial intermembrane. The helical transmembrane segment at 609 to 629 (TVGWKLISVTLSMYGALYLYE) threads the bilayer. Topologically, residues 630–741 (RLTWTTRAKE…QFLHPSSGES (112 aa)) are cytoplasmic. The stretch at 677-735 (FARLCQQVDVTQKHLEEEIARLSKEIDQLEKIQNNSKLLRNKAVQLESELENFSKQFLH) forms a coiled coil. The tract at residues 703-734 (DQLEKIQNNSKLLRNKAVQLESELENFSKQFL) is part of a helix bundle domain, formed by helices from N-terminal and C-terminal regions.

Belongs to the TRAFAC class dynamin-like GTPase superfamily. Dynamin/Fzo/YdjA family. Mitofusin subfamily. As to quaternary structure, homodimer, also in the absence of bound GTP. Forms higher oligomers in the presence of a transition state GTP analog. Forms homomultimers and heteromultimers with MFN2. Oligomerization is essential for mitochondrion fusion. Component of a high molecular weight multiprotein complex. Interacts with VAT1. Interacts with THG1L; THG1L probably functions as a guanyl-nucleotide exchange factor/GEF, activating MFN1. Ubiquitinated by MARCHF5. When mitochondria are depolarized and dysfunctional, it is ubiquitinated by a SCF (SKP1-CUL1-F-box protein) E3 ubiquitin-protein ligase complex that contains FBXO7 and PRKN. Ubiquitinated by non-degradative ubiquitin by PRKN, promoting mitochondrial fusion; deubiquitination by USP30 inhibits mitochondrial fusion. As to expression, detected in adult heart. Detected in embryos (at protein level). Widely expressed.

It is found in the mitochondrion outer membrane. It carries out the reaction GTP + H2O = GDP + phosphate + H(+). In terms of biological role, mitochondrial outer membrane GTPase that mediates mitochondrial clustering and fusion. Membrane clustering requires GTPase activity. It may involve a major rearrangement of the coiled coil domains. Mitochondria are highly dynamic organelles, and their morphology is determined by the equilibrium between mitochondrial fusion and fission events. Overexpression induces the formation of mitochondrial networks (in vitro). Has low GTPase activity. This is Mitofusin-1 (Mfn1) from Mus musculus (Mouse).